The chain runs to 239 residues: MSILDIHDVSVWYERDNVILEQVDLHLEKGAVYGLLGVNGAGKTTLINTLTGVNRNFSGRFTLCGIEAEAGMPQKTSDQLKTHRYFAADYPLLFTEITAKDYVSFVHSLYQKDFSEQQFASLAEAFHFSKYINRRISELSLGNRQKVVLMTGLLLRAPLFILDEPLVGLDVESIEVFYQKMREYCEAGGTILFSSHLLDVVQRFCDYAAILHNKQIQKVIPIGEETDLRREFFEVIGHE.

An ABC transporter domain is found at 4–238; it reads LDIHDVSVWY…RREFFEVIGH (235 aa). Residue 37-44 participates in ATP binding; that stretch reads GVNGAGKT.

It belongs to the ABC transporter superfamily.

Involved in the production of the bacteriocin subtilosin. Required for immunity to subtilosin. The sequence is that of Putative ABC transporter ATP-binding protein AlbC (albC) from Bacillus subtilis (strain 168).